The following is a 123-amino-acid chain: Histone H2B (123 aa).

The tract at residues 1–30 (MPPKTSGKAAKKAGKAQKNITKTDKKKKRR) is disordered. Proline 2 is subject to N-methylproline; partial. N6-succinyllysine is present on lysine 44. O-linked (GlcNAc) serine glycosylation occurs at serine 110. N6-succinyllysine occurs at positions 114 and 118. A Glycyl lysine isopeptide (Lys-Gly) (interchain with G-Cter in ubiquitin) cross-link involves residue lysine 118.

The protein belongs to the histone H2B family. The nucleosome is a histone octamer containing two molecules each of H2A, H2B, H3 and H4 assembled in one H3-H4 heterotetramer and two H2A-H2B heterodimers. The octamer wraps approximately 147 bp of DNA. Post-translationally, phosphorylated by the catalytic component of the Dbf4-dependent kinase (DDK) complex Cdc7. Monoubiquitination of Lys-118 by Bre1 gives a specific tag for epigenetic transcriptional activation and is also prerequisite for histone H3 'Lys-4' and 'Lys-79' methylation. Deubiquitination of Lys-118 by the SAGA complex is involved in activating transcription of a large subset of genes. In terms of processing, methylation at Pro-2 increases upon heat shock. Post-translationally, glcNAcylation at Ser-110 promotes monoubiquitination of Lys-118. It fluctuates in response to extracellular glucose, and associates with transcribed genes.

It is found in the nucleus. The protein localises to the chromosome. In terms of biological role, core component of nucleosome. Nucleosomes wrap and compact DNA into chromatin, limiting DNA accessibility to the cellular machineries which require DNA as a template. Histones thereby play a central role in transcription regulation, DNA repair, DNA replication and chromosomal stability. DNA accessibility is regulated via a complex set of post-translational modifications of histones, also called histone code, and nucleosome remodeling. The chain is Histone H2B (His2B) from Drosophila yakuba (Fruit fly).